We begin with the raw amino-acid sequence, 314 residues long: WD repeat-containing protein 38 (314 aa).

WD repeat units lie at residues 19-58 (QHGG…LLWR), 61-100 (GHTG…CLRV), 103-142 (GHQR…MLRL), 145-184 (GHRD…PAVS), 190-228 (GHSA…LLIQ), 231-272 (GHVT…ETLK), and 274-312 (VLDV…PRDP). The disordered stretch occupies residues 294 to 314 (AADQTRRQISRTSKSPRDPQT).

The sequence is that of WD repeat-containing protein 38 (WDR38) from Homo sapiens (Human).